The primary structure comprises 1001 residues: Phosphoenolpyruvate carboxylase (1001 aa).

Residues H189 and K642 contribute to the active site.

Belongs to the PEPCase type 1 family. Mg(2+) is required as a cofactor.

It catalyses the reaction oxaloacetate + phosphate = phosphoenolpyruvate + hydrogencarbonate. Functionally, forms oxaloacetate, a four-carbon dicarboxylic acid source for the tricarboxylic acid cycle. This chain is Phosphoenolpyruvate carboxylase, found in Prochlorococcus marinus (strain SARG / CCMP1375 / SS120).